A 274-amino-acid polypeptide reads, in one-letter code: Outer surface protein A (274 aa).

Positions 1–16 are cleaved as a signal peptide; that stretch reads MKKYLLGIGLILALIA. Cysteine 17 is lipidated: N-palmitoyl cysteine. Cysteine 17 is lipidated: S-diacylglycerol cysteine.

It belongs to the OspA lipoprotein family.

Its subcellular location is the cell outer membrane. The protein localises to the cell surface. In Borreliella burgdorferi (Lyme disease spirochete), this protein is Outer surface protein A.